An 82-amino-acid polypeptide reads, in one-letter code: MVDINQIPTRRPFHRRRKTCPFSGANAPKIDYKDVKLLQRYISERGKIVPSRITAVSQKKQRELARAIKRARFLGLLPYVVK.

The interval 1–20 (MVDINQIPTRRPFHRRRKTC) is disordered.

The protein belongs to the bacterial ribosomal protein bS18 family. As to quaternary structure, part of the 30S ribosomal subunit. Forms a tight heterodimer with protein bS6.

Functionally, binds as a heterodimer with protein bS6 to the central domain of the 16S rRNA, where it helps stabilize the platform of the 30S subunit. This Chelativorans sp. (strain BNC1) protein is Small ribosomal subunit protein bS18.